The primary structure comprises 132 residues: Peptide methionine sulfoxide reductase MsrB (132 aa).

Positions 8–130 (LDSWREELTE…NSASLKLVPR (123 aa)) constitute a MsrB domain. Zn(2+) contacts are provided by Cys47, Cys50, Cys96, and Cys99. The active-site Nucleophile is Cys119.

Belongs to the MsrB Met sulfoxide reductase family. Zn(2+) serves as cofactor.

The enzyme catalyses L-methionyl-[protein] + [thioredoxin]-disulfide + H2O = L-methionyl-(R)-S-oxide-[protein] + [thioredoxin]-dithiol. This chain is Peptide methionine sulfoxide reductase MsrB, found in Pseudomonas aeruginosa (strain UCBPP-PA14).